The chain runs to 669 residues: DNA mismatch repair protein MutL (669 aa).

The disordered stretch occupies residues 357–379 (EQRQNTENNQEKTFSSEESNSKS). The segment covering 361–379 (NTENNQEKTFSSEESNSKS) has biased composition (polar residues).

It belongs to the DNA mismatch repair MutL/HexB family.

This protein is involved in the repair of mismatches in DNA. It is required for dam-dependent methyl-directed DNA mismatch repair. May act as a 'molecular matchmaker', a protein that promotes the formation of a stable complex between two or more DNA-binding proteins in an ATP-dependent manner without itself being part of a final effector complex. This Staphylococcus aureus (strain Mu3 / ATCC 700698) protein is DNA mismatch repair protein MutL.